Here is a 64-residue protein sequence, read N- to C-terminus: Conotoxin Cal6.26 (64 aa).

Residues 1 to 22 form the signal peptide; it reads MKLTCVMIVAVLVLTVCKVVTS. 3 disulfides stabilise this stretch: Cys-32/Cys-50, Cys-40/Cys-54, and Cys-49/Cys-60.

In terms of tissue distribution, expressed by the venom duct.

The protein localises to the secreted. Its function is as follows. Probable neurotoxin. In Californiconus californicus (California cone), this protein is Conotoxin Cal6.26.